Consider the following 8886-residue polypeptide: Obscurin (8886 aa).

4 consecutive Ig-like domains span residues 9–99 (PRFL…LRVD), 109–201 (PHFL…LVVD), 234–320 (PPSP…QTYS), and 329–415 (PTVP…AELS). Cysteines 30 and 81 form a disulfide. The tract at residues 135–165 (SPQPAVSWSKDGRRLGPPDAPHVRVEEHGES) is disordered. Basic and acidic residues predominate over residues 144–164 (KDGRRLGPPDAPHVRVEEHGE). 2 disulfides stabilise this stretch: C257/C309 and C352/C402. S393 is modified (phosphoserine). Residues 513-610 (PPADPVVKAK…FPGTMHLVPM (98 aa)) form the Fibronectin type-III 1 domain. 43 Ig-like domains span residues 702 to 793 (PSSK…QDIT), 859 to 951 (PKLV…VAEP), 951 to 1043 (PKLV…VAEP), 1043 to 1135 (PKMV…VTEP), 1135 to 1227 (PKLV…VAEP), 1227 to 1319 (PKLV…VTEP), 1319 to 1407 (PKLV…FRLD), 1411 to 1503 (PKLV…VAEP), 1503 to 1595 (PKLV…VAEP), 1595 to 1687 (PKLA…VAEP), 1687 to 1779 (PKLA…VAEP), 1779 to 1871 (PKLA…VAEP), 1871 to 1963 (PKLM…VAEP), 1963 to 2051 (PKLV…FRLD), 2055 to 2147 (TRLM…VAEA), 2152 to 2241 (PERP…EEVA), 2242 to 2325 (AKFS…ARLT), 2329 to 2415 (PRVV…AALR), 2420 to 2504 (PVLF…AKLN), 2598 to 2681 (PVSF…ASLR), 2721 to 2812 (PVTL…QSIT), 2900 to 2984 (PVVL…AEVT), 3078 to 3162 (PVVF…SKVS), 3258 to 3342 (PVDI…AKLC), 3348 to 3431 (NRFT…ARLL), 3527 to 3610 (PSIF…SSIV), 3616 to 3700 (PVRF…ATLT), 3785 to 3876 (ATLT…ATLT), 3881 to 3964 (PAKF…ATLT), 4042 to 4125 (PTKF…ATLS), 4130 to 4213 (PSRF…ATLS), 4219 to 4301 (PRFI…ATLN), 4307 to 4389 (PRFI…AVLT), 4395 to 4477 (PKFT…ATLS), 4483 to 4565 (PRFI…ATLS), 4571 to 4653 (PRFI…ATLS), 4659 to 4741 (PRFI…ATLS), 4746 to 4829 (PAKF…ATLS), 4833 to 4916 (PQVV…TSAT), 4923 to 5007 (PVRF…ARLS), 5013 to 5105 (PKFK…PEVT), 5378 to 5464 (LEVL…ARLS), and 5557 to 5659 (PQMV…TFNV). Cystine bridges form between C885–C935, C977–C1027, C1069–C1119, C1161–C1211, C1253–C1303, C1345–C1395, C1437–C1487, C1529–C1579, C1621–C1671, C1713–C1763, C1805–C1855, C1897–C1947, C1989–C2039, and C2081–C2131. C2263 and C2313 are disulfide-bonded. Intrachain disulfides connect C2620–C2669, C2743–C2793, C2922–C2972, C3100–C3150, C3280–C3330, C3369–C3419, C3549–C3599, and C3638–C3688. At S3321 the chain carries Phosphoserine. S3802 carries the phosphoserine modification. Intrachain disulfides connect C3815-C3864, C3903-C3952, C4064-C4113, C4152-C4201, C4240-C4289, C4328-C4377, C4416-C4465, C4504-C4553, C4592-C4641, C4680-C4729, C4768-C4817, C4856-C4906, C4945-C4995, and C5034-C5086. S4960 bears the Phosphoserine mark. The 99-residue stretch at 5471–5569 (PPEDAEVVGR…VKIAPAPAPA (99 aa)) folds into the Fibronectin type-III 2 domain. C5590 and C5643 are disulfide-bonded. The residue at position 5699 (S5699) is a Phosphoserine. Residues 5700–5736 (REPTLDSISELPEEDSRVQHLRQEAEETAPDLSEGYS) are disordered. Residue T5703 is modified to Phosphothreonine. S5706 is modified (phosphoserine). The span at 5713–5724 (EDSRVQHLRQEA) shows a compositional bias: basic and acidic residues. A Phosphothreonine modification is found at T5737. At S5754 the chain carries Phosphoserine. An IQ domain is found at 5821–5850 (LDKAAVKIQAAFKGYKVRKEMKQQEGPVFS). Residues 5847–5930 (PVFSRTFGDT…QVSTKSGRVS (84 aa)) enclose the Ig-like 48 domain. Cysteines 5868 and 5920 form a disulfide. A disordered region spans residues 5977 to 5996 (EEELFLSADEGPGEPEEPAD). Ig-like domains lie at 6077–6166 (PVFL…AELR), 6209–6298 (PQVL…ARLL), and 6320–6416 (PRIL…LHIS). An intrachain disulfide couples C6098 to C6150. Residues 6504-6546 (KLQVPGGDSDEETKTPSASPRHGRSRPSSSVQESSSESEDGDS) form a disordered region. S6512 is modified (phosphoserine). The residue at position 6518 (T6518) is a Phosphothreonine. Over residues 6519-6538 (PSASPRHGRSRPSSSVQESS) the composition is skewed to low complexity. Phosphoserine is present on residues S6520 and S6522. An SH3 domain is found at 6549–6616 (EIFDIYVVTA…SPAYLDKRLK (68 aa)). Residues 6642–6826 (RLSSVIQELL…SALPQRAENK (185 aa)) form the DH domain. Residues 6844 to 6953 (EPIRQGHFIV…WVKEICGIQQ (110 aa)) form the PH domain. R6924 contacts a 1,2-diacyl-sn-glycero-3-phospho-(1D-myo-inositol-4,5-bisphosphate). An a 1,2-diacyl-sn-glycero-3-phospho-(1D-myo-inositol-3,4-bisphosphate)-binding site is contributed by R6929. 2 Ig-like domains span residues 6963-7046 (PEFE…GNAS) and 7057-7147 (PRFV…GELY). Intrachain disulfides connect C6984-C7036 and C7078-C7131. Positions 7200 to 7257 (ALGPSPGDLPNTRQSEPPAFEEAASQIPGAASGTPEVSQPGTHKGLEQETTSSGSQGW) are disordered. Polar residues predominate over residues 7247 to 7257 (QETTSSGSQGW). Positions 7306–7394 (PSMQVTIEDV…GQVLCKAELL (89 aa)) constitute an Ig-like 54 domain. The Protein kinase 1 domain occupies 7416–7669 (YDVQEEIGRG…TSQCLAHPWF (254 aa)). ATP-binding positions include 7422 to 7430 (IGRGVFGFV) and K7445. The active-site Proton acceptor is D7535. Disordered regions lie at residues 7717 to 7810 (GPPD…SPGC), 7879 to 8106 (EQAS…TTRK), and 8150 to 8180 (SSEE…VPLR). The residue at position 7779 (S7779) is a Phosphoserine. The span at 7793–7804 (AAVPASPQSAGP) shows a compositional bias: low complexity. The span at 7941–7952 (TTAKDRGHKEGF) shows a compositional bias: basic and acidic residues. The span at 7986–7996 (SCHSELGSGSQ) shows a compositional bias: polar residues. Low complexity-rich tracts occupy residues 8000–8014 (GPPS…PPQS) and 8053–8073 (GSLS…ASQV). S8161 is subject to Phosphoserine. Residues 8380-8464 (KGRDQELSDE…VSNPLGTAVT (85 aa)) enclose the Ig-like 55 domain. Residues C8401 and C8453 are joined by a disulfide bond. One can recognise a Fibronectin type-III 3 domain in the interval 8474-8566 (PSSSPRPEVG…PSEQVLLGGP (93 aa)). One can recognise a Protein kinase 2 domain in the interval 8590–8842 (FAFQMQIRRG…ASTCLQCGWL (253 aa)). ATP-binding positions include 8596 to 8604 (IRRGRFSVV) and K8619. The Proton acceptor role is filled by D8709.

It belongs to the protein kinase superfamily. CAMK Ser/Thr protein kinase family. In terms of assembly, interacts (via protein kinase domain 1) with CDH2 and (via protein kinase domain 1) with ATP1B1. Isoform 2 is found in a complex with DSG2, DESM, GJA1, CDH2 and VCL. Isoform 3 is found in a complex with DSG2, DESM, GJA1, CDH2, ANK3 and VCL. The cofactor is Mg(2+). Autophosphorylated by protein kinase domain 1 and 2. Post-translationally, two small isoforms, one probably containing protein kinase domain 2 and a partial protein kinase domain 1 and one containing only protein kinase domain 2, are glycosylated. In terms of tissue distribution, expressed in skeletal muscles including flexor digitorum brevis (FDB), soleus and tibialis anterior muscles, and to a lesser extent in heart muscles (at protein level). Isoform 2 and isoform 3 are expressed in the myocardium (at protein level).

It is found in the cytoplasm. The protein resides in the myofibril. Its subcellular location is the sarcomere. The protein localises to the m line. It localises to the z line. It is found in the cell membrane. The protein resides in the sarcolemma. Its subcellular location is the nucleus. The protein localises to the secreted. It catalyses the reaction L-seryl-[protein] + ATP = O-phospho-L-seryl-[protein] + ADP + H(+). It carries out the reaction L-threonyl-[protein] + ATP = O-phospho-L-threonyl-[protein] + ADP + H(+). Its function is as follows. Structural component of striated muscles which plays a role in myofibrillogenesis. Probably involved in the assembly of myosin into sarcomeric A bands in striated muscle. Has serine/threonine protein kinase activity and phosphorylates N-cadherin CDH2 and sodium/potassium-transporting ATPase subunit ATP1B1. Binds (via the PH domain) strongly to phosphatidylinositol 3,4-bisphosphate (PtdIns(3,4)P2) and phosphatidylinositol 4,5-bisphosphate (PtdIns(4,5)P2), and to a lesser extent to phosphatidylinositol 3-phosphate (PtdIns(3)P), phosphatidylinositol 4-phosphate (PtdIns(4)P), phosphatidylinositol 5-phosphate (PtdIns(5)P) and phosphatidylinositol 3,4,5-trisphosphate (PtdIns(3,4,5)P3). Isoform 2 and isoform 3: bind phosphatidylinositol bisphosphates (PIP2s) via their PH domains and negatively regulate the PI3K/AKT/mTOR signaling pathway, thus contributing to the regulation of cardiomyocyte size and adhesion. The sequence is that of Obscurin from Mus musculus (Mouse).